The chain runs to 204 residues: N-(5'-phosphoribosyl)anthranilate isomerase (204 aa).

Belongs to the TrpF family.

The catalysed reaction is N-(5-phospho-beta-D-ribosyl)anthranilate = 1-(2-carboxyphenylamino)-1-deoxy-D-ribulose 5-phosphate. It functions in the pathway amino-acid biosynthesis; L-tryptophan biosynthesis; L-tryptophan from chorismate: step 3/5. The chain is N-(5'-phosphoribosyl)anthranilate isomerase from Bacillus cereus (strain B4264).